We begin with the raw amino-acid sequence, 135 residues long: Large ribosomal subunit protein uL16c (135 aa).

This sequence belongs to the universal ribosomal protein uL16 family. Part of the 50S ribosomal subunit.

It is found in the plastid. It localises to the chloroplast. The protein is Large ribosomal subunit protein uL16c of Euglena gracilis.